The sequence spans 478 residues: Aspartyl/glutamyl-tRNA(Asn/Gln) amidotransferase subunit B (478 aa).

Belongs to the GatB/GatE family. GatB subfamily. In terms of assembly, heterotrimer of A, B and C subunits.

It carries out the reaction L-glutamyl-tRNA(Gln) + L-glutamine + ATP + H2O = L-glutaminyl-tRNA(Gln) + L-glutamate + ADP + phosphate + H(+). The enzyme catalyses L-aspartyl-tRNA(Asn) + L-glutamine + ATP + H2O = L-asparaginyl-tRNA(Asn) + L-glutamate + ADP + phosphate + 2 H(+). Allows the formation of correctly charged Asn-tRNA(Asn) or Gln-tRNA(Gln) through the transamidation of misacylated Asp-tRNA(Asn) or Glu-tRNA(Gln) in organisms which lack either or both of asparaginyl-tRNA or glutaminyl-tRNA synthetases. The reaction takes place in the presence of glutamine and ATP through an activated phospho-Asp-tRNA(Asn) or phospho-Glu-tRNA(Gln). In Dichelobacter nodosus (strain VCS1703A), this protein is Aspartyl/glutamyl-tRNA(Asn/Gln) amidotransferase subunit B.